The sequence spans 602 residues: Probable pectinesterase/pectinesterase inhibitor 64 (602 aa).

A helical membrane pass occupies residues 36 to 56 (ILIIIAASCILLLLISLLIYA). A disordered region spans residues 62–91 (SRNHHNPSHQTPTSDDHPPPETPPSPPPIA). The segment covering 81-90 (PETPPSPPPI) has biased composition (pro residues). A pectinesterase inhibitor 64 region spans residues 87–237 (PPPIAQIRLA…VNLTGNALSM (151 aa)). Asparagine 98, asparagine 156, asparagine 212, asparagine 229, and asparagine 315 each carry an N-linked (GlcNAc...) asparagine glycan. Residues 288-595 (DVTVCKNGGK…YSVANFIQAD (308 aa)) are pectinesterase 64. Threonine 367 and glutamine 397 together coordinate substrate. Residue aspartate 420 is the Proton donor; for pectinesterase activity of the active site. Cysteine 434 and cysteine 454 form a disulfide bridge. Aspartate 441 (nucleophile; for pectinesterase activity) is an active-site residue. N-linked (GlcNAc...) asparagine glycans are attached at residues asparagine 492 and asparagine 496. Substrate-binding residues include arginine 518 and tryptophan 520.

The protein in the N-terminal section; belongs to the PMEI family. This sequence in the C-terminal section; belongs to the pectinesterase family. In terms of tissue distribution, expressed in siliques.

It is found in the membrane. It carries out the reaction [(1-&gt;4)-alpha-D-galacturonosyl methyl ester](n) + n H2O = [(1-&gt;4)-alpha-D-galacturonosyl](n) + n methanol + n H(+). The protein operates within glycan metabolism; pectin degradation; 2-dehydro-3-deoxy-D-gluconate from pectin: step 1/5. Functionally, acts in the modification of cell walls via demethylesterification of cell wall pectin. The sequence is that of Probable pectinesterase/pectinesterase inhibitor 64 (PME64) from Arabidopsis thaliana (Mouse-ear cress).